Reading from the N-terminus, the 546-residue chain is G1/S-specific cyclin CLN1 (546 aa).

The tract at residues 224 to 265 (SNGKEWSCKRKSQSSDDSDATVEEHISSSPQSTGLDGDTTTM) is disordered.

Belongs to the cyclin family.

In terms of biological role, essential for the control of the cell cycle at the G1/S (start) transition. Interacts with the CDC28 protein kinase to form MPF. The polypeptide is G1/S-specific cyclin CLN1 (CLN1) (Saccharomyces cerevisiae (strain ATCC 204508 / S288c) (Baker's yeast)).